The following is a 584-amino-acid chain: UvrABC system protein C (584 aa).

In terms of domain architecture, GIY-YIG spans 12-89 (NKPGCYLFFN…IKKYHPKYNV (78 aa)). Residues 194–229 (NQVKQTLVKQMQKASDNLQFEQAQRIKDQITSLDFI) enclose the UVR domain.

It belongs to the UvrC family. In terms of assembly, interacts with UvrB in an incision complex.

It is found in the cytoplasm. The UvrABC repair system catalyzes the recognition and processing of DNA lesions. UvrC both incises the 5' and 3' sides of the lesion. The N-terminal half is responsible for the 3' incision and the C-terminal half is responsible for the 5' incision. The sequence is that of UvrABC system protein C from Mycoplasma mycoides subsp. mycoides SC (strain CCUG 32753 / NCTC 10114 / PG1).